We begin with the raw amino-acid sequence, 670 residues long: DNA ligase (670 aa).

NAD(+) is bound by residues 32–36 (DAEYD), 81–82 (SL), and Glu-113. The N6-AMP-lysine intermediate role is filled by Lys-115. NAD(+) is bound by residues Arg-136, Glu-173, Lys-290, and Lys-314. Zn(2+) is bound by residues Cys-408, Cys-411, Cys-426, and Cys-432. The 79-residue stretch at 592–670 (ESDSPFAGKT…EAEMIRLLGE (79 aa)) folds into the BRCT domain.

This sequence belongs to the NAD-dependent DNA ligase family. LigA subfamily. It depends on Mg(2+) as a cofactor. Requires Mn(2+) as cofactor.

It catalyses the reaction NAD(+) + (deoxyribonucleotide)n-3'-hydroxyl + 5'-phospho-(deoxyribonucleotide)m = (deoxyribonucleotide)n+m + AMP + beta-nicotinamide D-nucleotide.. Functionally, DNA ligase that catalyzes the formation of phosphodiester linkages between 5'-phosphoryl and 3'-hydroxyl groups in double-stranded DNA using NAD as a coenzyme and as the energy source for the reaction. It is essential for DNA replication and repair of damaged DNA. This chain is DNA ligase, found in Yersinia pestis bv. Antiqua (strain Antiqua).